We begin with the raw amino-acid sequence, 323 residues long: Peroxisome biogenesis protein 20 (323 aa).

C8 participates in a covalent cross-link: Glycyl cysteine thioester (Cys-Gly) (interchain with G-Cter in ubiquitin). Residue K19 forms a Glycyl lysine isopeptide (Lys-Gly) (interchain with G-Cter in ubiquitin) linkage. 3 short sequence motifs (wxxxF/Y motif) span residues 89–93, 102–105, and 141–145; these read WSSEF, WVED, and WTQEF.

Belongs to the peroxisomal targeting signal receptor family. In terms of assembly, interacts (via WxxxF/Y and LVxEF motifs) with PEX14; promoting translocation through the PEX13-PEX14 docking complex. Interacts with PEX7. Monoubiquitinated at Cys-8 by PEX2 during PEX20 passage through the PEX2-PEX10-PEX12 retrotranslocation channel: monoubiquitination acts as a signal for PEX20 extraction and is required for proper export from peroxisomes and recycling. When PEX5 recycling is compromised, polyubiquitinated at Lys-19 by PEX10 during its passage through the retrotranslocation channel, leading to its degradation.

It localises to the cytoplasm. It is found in the cytosol. Its subcellular location is the peroxisome matrix. Functionally, coreceptor required for the peroxisomal import of proteins containing a C-terminal PTS2-type peroxisomal targeting signal, such as 3-oxoacyl-CoA thiolase. Acts via its interaction with PEX7, promoting association between PEX7 bound to cargo proteins and the PEX13-PEX14 docking complex. PEX20 along with PEX7 and PTS2-containing cargo proteins are tranlocated into peroxisomes by passing through the PEX13-PEX14 docking complex. PEX20 coreceptor is then retrotranslocated into the cytosol, leading to release of bound cargo in the peroxisome matrix, and reset for a subsequent peroxisome import cycle. Also mediates peroxisomal import of proteins that do not contain PTS1- or PTS2-type peroxisomal targeting signals, such as acyl-CoA oxidases (Aox) izozymes. Import of acyl-CoA oxidases (Aox) izozymes is independent of PEX7. Required for PEX7 ubiquitination. In Komagataella pastoris (Yeast), this protein is Peroxisome biogenesis protein 20.